The primary structure comprises 415 residues: Serine hydroxymethyltransferase (415 aa).

Basic and acidic residues predominate over residues 1-10 (MERSHIRDVD). The tract at residues 1–21 (MERSHIRDVDPDAADALSSER) is disordered. Residues Leu119 and 123–125 (GHL) contribute to the (6S)-5,6,7,8-tetrahydrofolate site. Lys228 carries the post-translational modification N6-(pyridoxal phosphate)lysine. 353–355 (SAF) is a (6S)-5,6,7,8-tetrahydrofolate binding site.

This sequence belongs to the SHMT family. In terms of assembly, homodimer. The cofactor is pyridoxal 5'-phosphate.

It localises to the cytoplasm. It carries out the reaction (6R)-5,10-methylene-5,6,7,8-tetrahydrofolate + glycine + H2O = (6S)-5,6,7,8-tetrahydrofolate + L-serine. The protein operates within one-carbon metabolism; tetrahydrofolate interconversion. Its pathway is amino-acid biosynthesis; glycine biosynthesis; glycine from L-serine: step 1/1. In terms of biological role, catalyzes the reversible interconversion of serine and glycine with tetrahydrofolate (THF) serving as the one-carbon carrier. Also exhibits THF-independent aldolase activity toward beta-hydroxyamino acids, producing glycine and aldehydes, via a retro-aldol mechanism. The sequence is that of Serine hydroxymethyltransferase from Haloquadratum walsbyi (strain DSM 16790 / HBSQ001).